Here is a 249-residue protein sequence, read N- to C-terminus: Methionine aminopeptidase 2 (249 aa).

Residue H76 coordinates substrate. The a divalent metal cation site is built by D94, D105, and H168. H175 contributes to the substrate binding site. Residues E202 and E233 each contribute to the a divalent metal cation site.

Monomer. It depends on Co(2+) as a cofactor. The cofactor is Zn(2+). Mn(2+) serves as cofactor. Requires Fe(2+) as cofactor.

It is found in the cytoplasm. The enzyme catalyses Release of N-terminal amino acids, preferentially methionine, from peptides and arylamides.. Removes the N-terminal methionine from nascent proteins. The N-terminal methionine is often cleaved when the second residue in the primary sequence is small and uncharged (Met-Ala-, Cys, Gly, Pro, Ser, Thr, or Val). Requires deformylation of the N(alpha)-formylated initiator methionine before it can be hydrolyzed. This Bacillus subtilis (strain 168) protein is Methionine aminopeptidase 2.